A 407-amino-acid chain; its full sequence is MFRNYNWFDAKEPISYESEIYAKGLKFQRPQITVDGRHWEQLAVERMTKDAAGYVYGCAGKRETYDKNMESFKKWSIIPNRLIKSGFPDLSTTVFGQKYPFPIALAPVGVQKIFNPEGESGSCAAATREHIPYIISTASATSFEDIEKASGPGERWYQLYWPSNDHQDITISLLNRAKKTGCRVLIVTLDTFILGWRPSDMDNGYDPFLNPDSIGVEHGFSDPVFRKQFKEKHGVEVEENMLEAAKEFAGIVFPGISHDWEDLKFLRKHWDGPIVLKGIMNVPDAKKAVEYGMQGIVVSNHGGRQQDGGVASLTMLPKIVDAVGDKLDVLFDSGVRSGADIAKALALGAKMVLIGRPYVYGLALEGSSGVSHVIRCLLGDLELTLHLSGIVSVKPKDLNRDVLYKEE.

The FMN hydroxy acid dehydrogenase domain maps to 28-406; sequence QRPQITVDGR…DLNRDVLYKE (379 aa). Tyr-54 is an a 2-oxocarboxylate binding site. Ser-136 and Gln-158 together coordinate FMN. Tyr-160 provides a ligand contact to a 2-oxocarboxylate. FMN is bound at residue Thr-188. Arg-197 is an a 2-oxocarboxylate binding site. Lys-277 serves as a coordination point for FMN. His-301 (proton acceptor) is an active-site residue. Arg-304 contributes to the a 2-oxocarboxylate binding site. Residues 332–336 and 355–356 each bind FMN; these read DSGVR and GR.

The protein belongs to the FMN-dependent alpha-hydroxy acid dehydrogenase family. It depends on FMN as a cofactor.

The protein localises to the cytoplasm. It localises to the nucleus. In Schizosaccharomyces pombe (strain 972 / ATCC 24843) (Fission yeast), this protein is FMN-dependent alpha-hydroxy acid dehydrogenase PB1A11.03.